A 758-amino-acid chain; its full sequence is Dachshund homolog 1 (758 aa).

2 disordered regions span residues 1 to 105 (MAVP…SNCN) and 134 to 185 (INAS…TPQN). The span at 20–53 (ISTSASSSGTTTSTSSATSSPAPSIGPPASSGPT) shows a compositional bias: low complexity. A compositionally biased stretch (gly residues) spans 73 to 102 (TGGGGGGGGSGGGGGSSGNGGGGGGGGGGS). Residues 140-163 (SSSSSSSSSSSSSSSSSSSSSSSS) are compositionally biased toward low complexity. Residues 174–185 (STPSPVENTPQN) show a composition bias toward polar residues. Residues 189–275 (KMVDLRGAKV…LISRKDFETL (87 aa)) form a DACHbox-N region. The interval 189-384 (KMVDLRGAKV…VGSSDGSWDK (196 aa)) is interaction with SIX6 and HDAC3. Disordered regions lie at residues 280 to 302 (TNAS…PENS), 358 to 414 (SNNQ…PLSH), 474 to 532 (SPPS…RIPV), and 544 to 564 (MGLS…GHDM). Polar residues-rich tracts occupy residues 292 to 301 (RTQSVTSPEN), 358 to 380 (SNNQ…SSDG), and 387 to 399 (LPSS…QASI). Ser491 carries the post-translational modification Phosphoserine. Over residues 506-524 (SHPSSHRSSSVSSSPARTE) the composition is skewed to low complexity. Over residues 555–564 (KEGDLAGHDM) the composition is skewed to basic and acidic residues. The tract at residues 616–696 (SSIETLLTNI…KAKRKLQEAL (81 aa)) is DACHbox-C. The interaction with SIN3A stretch occupies residues 627–706 (GLLKVAIDNA…EFETKRREQA (80 aa)). Residues 630–718 (KVAIDNARAQ…TLKQAASTDS (89 aa)) are a coiled coil.

Belongs to the DACH/dachshund family. Interacts with SIX1, SIX6 and EYA3. Interacts with NCOR1 and HDAC3 through its N-terminus. Interacts with SIN3A through its C-terminus. Interacts with SMAD3 and SMAD4. In terms of tissue distribution, widely expressed. Isoform 2 is found in brain, heart, kidney, liver, leukocytes and spleen. Isoform 3 is found in liver and heart. Isoform 4 is found in spleen.

It localises to the nucleus. Transcription factor that is involved in regulation of organogenesis. Seems to be a regulator of SIX1, SIX6 and probably SIX5. Corepression of precursor cell proliferation in myoblasts by SIX1 is switched to coactivation through recruitment of EYA3 to the SIX1-DACH1 complex. Transcriptional activation also seems to involve association of CREBBP. Seems to act as a corepressor of SIX6 in regulating proliferation by directly repressing cyclin-dependent kinase inhibitors, including the p27Kip1 promoter. Inhibits TGF-beta signaling through interaction with SMAD4 and NCOR1. Binds to chromatin DNA via its DACHbox-N domain. This chain is Dachshund homolog 1 (DACH1), found in Homo sapiens (Human).